We begin with the raw amino-acid sequence, 578 residues long: Multidrug resistance-like ATP-binding protein MdlB (578 aa).

One can recognise an ABC transmembrane type-1 domain in the interval L25–Q308. The next 6 membrane-spanning stretches (helical) occupy residues I26–I46, V59–L79, S143–W163, A166–F186, V196–Q216, and L260–G280. In terms of domain architecture, ABC transporter spans I339 to S573. G373–S380 contributes to the ATP binding site.

Belongs to the ABC transporter superfamily. Drug exporter-2 (TC 3.A.1.117) family.

It is found in the cell membrane. It catalyses the reaction ATP + H2O + xenobioticSide 1 = ADP + phosphate + xenobioticSide 2.. The sequence is that of Multidrug resistance-like ATP-binding protein MdlB (mdlB) from Buchnera aphidicola subsp. Baizongia pistaciae (strain Bp).